The sequence spans 514 residues: MAVWLAQWLGPLLLVSLWGLLAPASLLRRLGEHIQQFQESSAQGLGLSLGPGAAALPKVGWLEQLLDPFNVSDRRSFLQRYWVNDQHWVGQDGPIFLHLGGEGSLGPGSVMRGHPAALAPAWGALVISLEHRFYGLSIPAGGLEMAQLRFLSSRLALADVVSARLALSRLFNISSSSPWICFGGSYAGSLAAWARLKFPHLIFASVASSAPVRAVLDFSEYNDVVSRSLMSTAIGGSLECRAAVSVAFAEVERRLRSGGAAQAALRTELSACGPLGRAENQAELLGALQALVGGVVQYDGQTGAPLSVRQLCGLLLGGGGNRSHSTPYCGLRRAVQIVLHSLGQKCLSFSRAETVAQLRSTEPQLSGVGDRQWLYQTCTEFGFYVTCENPRCPFSQLPALPSQLDLCEQVFGLSALSVAQAVAQTNSYYGGQTPGANKVLFVNGDTDPWHVLSVTQALGSSESTLLIRTGSHCLDMAPERPSDSPSLRLGRQNIFQQLQTWLKLAKESQIKGEV.

The first 24 residues, 1-24, serve as a signal peptide directing secretion; sequence MAVWLAQWLGPLLLVSLWGLLAPA. 2 N-linked (GlcNAc...) asparagine glycosylation sites follow: Asn70 and Asn172. Ser185 (charge relay system) is an active-site residue. Asn321 carries N-linked (GlcNAc...) asparagine glycosylation. Active-site charge relay system residues include Asp447 and His472.

Belongs to the peptidase S28 family. As to expression, expressed predominantly in cortical thymic epithelial cells.

Its subcellular location is the cytoplasmic vesicle. Protease that may play a role in T-cell development. The sequence is that of Thymus-specific serine protease (PRSS16) from Homo sapiens (Human).